Reading from the N-terminus, the 329-residue chain is Ankyrin repeat and SOCS box protein 5 (329 aa).

ANK repeat units follow at residues 69–98 (ADRS…NVNA), 102–131 (DHVT…NANA), 135–164 (DGVT…KAQL), 167–196 (CFPS…DVDQ), 200–229 (HLGT…DVHK), and 232–261 (YWDT…DINA). An SOCS box domain is found at 278–329 (AVERILLQHEATPSSLCQLCRLCIRNYIGRQRFHLIPQLQLPTLLQNFLQYR).

It belongs to the ankyrin SOCS box (ASB) family.

Its pathway is protein modification; protein ubiquitination. In terms of biological role, may be a substrate-recognition component of a SCF-like ECS (Elongin-Cullin-SOCS-box protein) E3 ubiquitin-protein ligase complex which mediates the ubiquitination and subsequent proteasomal degradation of target proteins. May play a role in the initiation of arteriogenesis. In Mus musculus (Mouse), this protein is Ankyrin repeat and SOCS box protein 5 (Asb5).